The following is a 394-amino-acid chain: Ceramide glucosyltransferase (394 aa).

Topologically, residues 1 to 10 (MAVLDLALQG) are lumenal. A helical transmembrane segment spans residues 11–32 (LAIFGCVLFFVLWFMHFLSIVY). Over 33 to 195 (TRLHLNKKVS…QVYFGTSHPR (163 aa)) the chain is Cytoplasmic. A short sequence motif (D1) is located at residue Asp-92. Asp-144 is a short sequence motif (D2). Residues 196–215 (SYISANVTGFKCVTGMSCLM) form a helical membrane-spanning segment. Residues 216 to 287 (RKEVLDQAGG…KLRINMLPAT (72 aa)) lie on the Lumenal side of the membrane. Asp-236 is a short sequence motif (D3). Asp-236 acts as the Proton acceptor in catalysis. Residues 272–276 (RMIRW) carry the (Q/R)XXRW motif. Residues 288–304 (IICEPISECFVASLIIG) form a helical membrane-spanning segment. The Cytoplasmic portion of the chain corresponds to 305–309 (WAAHH). Residues 310–328 (IFRWDIMVFFMCHCLAWFI) form a helical membrane-spanning segment. At 329–348 (FDYIQLRGVQGGPLNFSKLD) the chain is on the lumenal side. A helical transmembrane segment spans residues 349–369 (YAVAWFIRESMTIYIFLSALW). The Cytoplasmic portion of the chain corresponds to 370 to 394 (DPTISWRTGRYRLRCGGTAEEILDV).

The protein belongs to the glycosyltransferase 2 family.

Its subcellular location is the golgi apparatus membrane. The catalysed reaction is an N-acylsphing-4-enine + UDP-alpha-D-glucose = a beta-D-glucosyl-(1&lt;-&gt;1')-N-acylsphing-4-enine + UDP + H(+). The enzyme catalyses UDP-alpha-D-xylose + an N-acylsphing-4-enine = a beta-D-xylosyl-(1&lt;-&gt;1')-N-acylsphing-4-enine + UDP + H(+). It catalyses the reaction N-(9Z-octadecenoyl)-sphing-4-enine + UDP-alpha-D-xylose = beta-D-xylosyl-(1&lt;-&gt;1')-N-(9Z-octadecenoyl)-sphing-4-enine + UDP + H(+). It participates in lipid metabolism; sphingolipid metabolism. Participates in the initial step of the glucosylceramide-based glycosphingolipid/GSL synthetic pathway at the cytosolic surface of the Golgi. Catalyzes the transfer of glucose from UDP-glucose to ceramide to produce glucosylceramide/GlcCer (such as beta-D-glucosyl-(1&lt;-&gt;1')-N-acylsphing-4-enine). Glucosylceramide is the core component of glycosphingolipids/GSLs, amphipathic molecules consisting of a ceramide lipid moiety embedded in the outer leaflet of the membrane, linked to one of hundreds of different externally oriented oligosaccharide structures. Glycosphingolipids are essential components of membrane microdomains that mediate membrane trafficking and signal transduction. They are implicated in many fundamental cellular processes, including growth, differentiation, migration, morphogenesis, cell-to-cell and cell-to-matrix interactions. Catalyzes the synthesis of xylosylceramide/XylCer (such as beta-D-xylosyl-(1&lt;-&gt;1')-N-acylsphing-4-enine) using UDP-Xyl as xylose donor. This chain is Ceramide glucosyltransferase (ugcg), found in Xenopus tropicalis (Western clawed frog).